The sequence spans 402 residues: Multidrug resistance protein MdtH (402 aa).

The Cytoplasmic portion of the chain corresponds to 1 to 12; it reads MSRVSQARNLGK. The helical transmembrane segment at 13-33 threads the bilayer; sequence YFLLIDNMLVVLGFFVVFPLI. Residues 34–98 lie on the Periplasmic side of the membrane; sequence SIRFVDQMGW…GFATMGIAHE (65 aa). Residues 99-116 form a helical membrane-spanning segment; the sequence is PWLLWFSCLLSGLGGTLF. At 117–138 the chain is on the cytoplasmic side; the sequence is DPPRSALVVKLIRPQQRGRFFS. Residues 139–159 traverse the membrane as a helical segment; the sequence is LLMMQDSAGAVIGALLGSWLL. Residues 160–164 are Periplasmic-facing; that stretch reads QYDFR. Residues 165–185 traverse the membrane as a helical segment; sequence LVCATGAVLFVLCAAFNAWLL. The Cytoplasmic portion of the chain corresponds to 186–213; sequence PAWKLSTVRTPVREGMTRVMRDKRFVTY. Residues 214–234 form a helical membrane-spanning segment; the sequence is VLTLAGYYMLAVQVMLMLPIM. Topologically, residues 235-243 are periplasmic; sequence VNDVAGAPS. A helical transmembrane segment spans residues 244–264; that stretch reads AVKWMYAIEACLSLTLLYPIA. At 265–276 the chain is on the cytoplasmic side; it reads RWSEKHFRLEHR. The helical transmembrane segment at 277-297 threads the bilayer; the sequence is LMAGLLIMSLSMMPVGMVSGL. The Periplasmic portion of the chain corresponds to 298-299; the sequence is QQ. Residues 300-320 form a helical membrane-spanning segment; it reads LFTLICLFYIGSIIAEPARET. At 321–339 the chain is on the cytoplasmic side; the sequence is LSASLADARARGSYMGFSR. A helical membrane pass occupies residues 340–360; that stretch reads LGLAIGGAIGYIGGGWLFDLG. The Periplasmic segment spans residues 361–367; that stretch reads KSVHQPE. The chain crosses the membrane as a helical span at residues 368–388; it reads LPWMMLGIIGIFTFLALGWQF. The Cytoplasmic segment spans residues 389–402; sequence SQKRAARRLLERDA.

This sequence belongs to the major facilitator superfamily. DHA1 family. MdtH (TC 2.A.1.2.21) subfamily.

It localises to the cell inner membrane. In terms of biological role, confers resistance to norfloxacin and enoxacin. This is Multidrug resistance protein MdtH from Escherichia coli O157:H7.